Here is a 573-residue protein sequence, read N- to C-terminus: Splicing factor U2af large subunit B (573 aa).

A compositionally biased stretch (acidic residues) spans 1 to 12 (MPDYEGNGEDID). The tract at residues 1-187 (MPDYEGNGED…DMAPPTSAML (187 aa)) is disordered. The span at 38 to 145 (SDSKSQHSSR…QREHAKDRES (108 aa)) shows a compositional bias: basic and acidic residues. Positions 161–173 (SRSRSRSRSKSKR) are enriched in basic residues. RRM domains are found at residues 239-322 (RRVY…RPSD), 359-437 (DRIF…RANQ), and 478-564 (EVIS…YPEN).

Belongs to the splicing factor SR family. In terms of tissue distribution, expressed in stems, leaves and apical buds.

It localises to the nucleus. Necessary for the splicing of pre-mRNA. Binds to the U -enriched regions of plant introns. The sequence is that of Splicing factor U2af large subunit B (U2AF65B) from Nicotiana plumbaginifolia (Leadwort-leaved tobacco).